The chain runs to 756 residues: MSEVQSPVPTESRLGRISNKILSLRGASYIVGALGLCALIAATTVTLNNNEQLIVAAVCVVIFFVVGRGKSRRTQIFLEVLSALVSLRYLTWRLTETLDFNTWIQGILGVILLMAELYALYMLFLSYFQTIQPLHRAPLPLPDNVDDWPTVDIFIPTYDEQLSIVRLTVLGALGIDWPPDKVNVYILDDGVRPEFEQFAKDCGALYIGRVDVDSAHAKAGNLNHAIKRTSGDYILILDCDHIPTRAFLQIAMGWMVADRKIALMQTPHHFYSPDPFQRNLAVGYRTPPEGNLFYGVIQDGNDFWDATFFCGSCAILRREAIESIGGFAVETVTEDAHTALRMQRRGWSTAYLRIPVASGLATERLTTHIGQRMRWARGMIQIFRVDNPMLGRGLKLGQRLCYLSAMTSFFFAIPRVIFLASPLAFLFAGQNIIAAAPLAVAAYALPHMFHSIATAAKVNKGWRYSFWSEVYETTMALFLVRVTIVTLLFPSKGKFNVTEKGGVLEEEEFDLGATYPNIIFATIMMGGLLIGLFELIVRFNQLDVIARNAYLLNCAWALISLIILFAAIAVGRETKQVRYNHRVEAHIPVTVYDAPAEGQPHTYYNATHGMTQDVSMGGVAVHIPLPDVTTGPVKKRIHAVLDGEEIDIPATMLRCTNGKAVFTWDNNDLDTERDIVRFVFGRADAWLQWNNYEDDRPLRSLWSLLLSIKALFRKKGKIMANSRPKKKPLALPVERREPTTIHSGQTQEGKISRAAS.

A run of 4 helical transmembrane segments spans residues 27–47 (ASYI…TVTL), 49–69 (NNEQ…VGRG), 106–126 (GILG…LFLS), and 167–187 (LTVL…VYIL). The interval 147-242 (DWPTVDIFIP…YILILDCDHI (96 aa)) is catalytic subdomain A. Residue D189 is part of the active site. Residues D238 and D240 each coordinate substrate. The interval 319–379 (EAIESIGGFA…GQRMRWARGM (61 aa)) is catalytic subdomain B. D335 is an active-site residue. The next 5 membrane-spanning stretches (helical) occupy residues 409-429 (FFFA…LFAG), 432-452 (IIAA…FHSI), 470-490 (VYET…LLFP), 517-537 (NIIF…ELIV), and 551-571 (LLNC…IAVG). The region spanning 576-681 (QVRYNHRVEA…ERDIVRFVFG (106 aa)) is the PilZ domain. The segment at 721-756 (NSRPKKKPLALPVERREPTTIHSGQTQEGKISRAAS) is disordered. Polar residues predominate over residues 740-756 (TIHSGQTQEGKISRAAS).

This sequence belongs to the glycosyltransferase 2 family. Mg(2+) serves as cofactor.

The protein localises to the cell inner membrane. The catalysed reaction is [(1-&gt;4)-beta-D-glucosyl](n) + UDP-alpha-D-glucose = [(1-&gt;4)-beta-D-glucosyl](n+1) + UDP + H(+). The protein operates within glycan metabolism; bacterial cellulose biosynthesis. Its activity is regulated as follows. Activated by bis-(3'-5') cyclic diguanylic acid (c-di-GMP). In terms of biological role, catalytic subunit of cellulose synthase. It polymerizes uridine 5'-diphosphate glucose to cellulose. The thick cellulosic mats generated by this enzyme probably provide a specialized protective environment to the bacterium. The protein is Cellulose synthase catalytic subunit [UDP-forming] (bcsA) of Komagataeibacter sucrofermentans (strain ATCC 700178 / DSM 15973 / CECT 7291 / JCM 9730 / LMG 18788 / BPR 2001) (Acetobacter xylinus subsp. sucrofermentans).